The primary structure comprises 43 residues: Pre-protein VI (43 aa).

The propeptide occupies 1-33 (MEGINFSALAPRYGSRPMLSSWSDIGTSSMNGG).

Belongs to the adenoviridae protein VI family. Interacts with hexon protein; this interaction allows nuclear import of hexon trimers and possibly pre-capsid assembly. Interacts (via C-terminal NLS) with importin alpha/beta. As to quaternary structure, interacts (via PPxY motif) with host NEDD4 ubiquitine ligase; this interaction might play a role in virus intracellular transport during entry. Part of a complex composed of the core-capsid bridging protein, the endosome lysis protein VI and the hexon-linking protein VIII; these interactions bridge the virus core to the capsid. Interacts with peripentonal hexons; this interaction stabilizes the capsid by gluing two peripentonal hexons together and joining them with an adjacent group-of-nine hexon. Protease cofactor: Heterodimer with the viral protease; disulfide-linked. Interacts with the viral protease. In terms of processing, ubiquitinated by Nedd4 following partial capsid disassembly; which might play a role in intracellular virus movement during entry. Post-translationally, protease cofactor: Contains the major nuclear import and export signals. Proteolytically removed during virion maturation. The processing of the C-terminus turns the precursor into a mature viral structural protein and abrogates its ability to promote hexon import and act as a potential chaperone protein.

The protein localises to the host nucleus. It is found in the host cytoplasm. It localises to the virion. In terms of biological role, during virus assembly, promotes hexon trimers nuclear import through nuclear pore complexes via an importin alpha/beta-dependent mechanism. By analogy to herpesviruses capsid assembly, might act as a chaperone to promote the formation of the icosahedral capsid. Structural component of the virion that provides increased stability to the particle shell through its interaction with the core-capsid bridging protein and the hexon-linking protein VIII. Fibers shedding during virus entry into host cell allows the endosome lysis protein to be exposed as a membrane-lytic peptide. Exhibits pH-independent membrane fragmentation activity and probably mediates viral rapid escape from host endosome via organellar membrane lysis. It is not clear if it then remains partially associated with the capsid and involved in the intracellular microtubule-dependent transport of capsid to the nucleus, or if it is lost during endosomal penetration. The polypeptide is Pre-protein VI (Bovine adenovirus 2 (BAdV-2)).